The sequence spans 194 residues: MIEKSMPAQNTHAADADLIGPDKSLLIVDDDTAFLRRLARAMEARGFAVEIAESVAEGIAKAKTRPPKHAVIDLRLSDGSGLDVIEAIRGRRDDTRMIVLTGYGNIATAVNAVKLGALDYLAKPADADDILAALIQRPGERVEPPENPMSADRVRWEHIQRVYEMCERNVSETARRLNMHRRTLQRILAKRAPK.

One can recognise a Response regulatory domain in the interval 24–138 (SLLIVDDDTA…DILAALIQRP (115 aa)). Asp-73 bears the 4-aspartylphosphate mark.

Phosphorylated by ActS.

Member of the two-component regulatory system ActS/ActR acting in acid tolerance. These data implicate that a two-component sensor may be involved in pH sensing and/or response. The chain is Acid tolerance regulatory protein ActR (actR) from Rhizobium meliloti (strain 1021) (Ensifer meliloti).